The primary structure comprises 471 residues: Galactolipase DONGLE, chloroplastic (471 aa).

The N-terminal 88 residues, 1 to 88, are a transit peptide targeting the chloroplast; the sequence is MAAKVFTQNP…PLSRVWREIQ (88 aa). Positions 44–71 are disordered; it reads SSSTMSPPISSSPLSLPSSSSSQAIPPS. The GXSXG motif lies at 284–288; it reads GHSMG. S286 acts as the Acyl-ester intermediate in catalysis. Catalysis depends on charge relay system residues D349 and H400.

Belongs to the AB hydrolase superfamily. Lipase family. In terms of tissue distribution, expressed in leaves and seedlings. Not detected in flowers, siliques or roots.

It localises to the plastid. It is found in the chloroplast. It catalyses the reaction a 1,2-diacyl-3-O-(beta-D-galactosyl)-sn-glycerol + 2 H2O = 3-beta-D-galactosyl-sn-glycerol + 2 a fatty acid + 2 H(+). The catalysed reaction is a 1,2-diacyl-sn-glycero-3-phosphocholine + H2O = a 2-acyl-sn-glycero-3-phosphocholine + a fatty acid + H(+). The enzyme catalyses a 1,2-diacyl-3-O-[alpha-D-galactosyl-(1-&gt;6)-beta-D-galactosyl]-sn-glycerol + H2O = acyl-3-O-[alpha-D-galactosyl-(1-&gt;6)-beta-D-galactosyl]-sn-glycerol + a fatty acid + H(+). Sn-1-specific phospholipase that releases free fatty acids from phosphatidylcholine. Has a higher galactolipase activity than phospholipase A1 activity when digalactosyldiacylglycerol (DGDG) is used as substrate. Catalyzes the initial step of jasmonic acid biosynthesis. Required for the biosynthesis of basal-level endogenous jasmonate in vegetative tissues. Regulates leaves growth. Not essential for jasmonate biosynthesis after wounding or upon pathogen infection. This Arabidopsis thaliana (Mouse-ear cress) protein is Galactolipase DONGLE, chloroplastic.